A 362-amino-acid chain; its full sequence is tRNA-specific 2-thiouridylase MnmA 3 (362 aa).

Residues 11 to 18 (GMSGGIDS) and M37 each bind ATP. The Nucleophile role is filled by C91. A disulfide bridge connects residues C91 and C188. G115 contacts ATP. The interval 137-139 (KDQ) is interaction with tRNA. C188 (cysteine persulfide intermediate) is an active-site residue. Residues 296-297 (RY) form an interaction with tRNA region.

This sequence belongs to the MnmA/TRMU family.

Its subcellular location is the cytoplasm. It catalyses the reaction S-sulfanyl-L-cysteinyl-[protein] + uridine(34) in tRNA + AH2 + ATP = 2-thiouridine(34) in tRNA + L-cysteinyl-[protein] + A + AMP + diphosphate + H(+). Its function is as follows. Catalyzes the 2-thiolation of uridine at the wobble position (U34) of tRNA, leading to the formation of s(2)U34. The polypeptide is tRNA-specific 2-thiouridylase MnmA 3 (Bacteroides fragilis (strain YCH46)).